We begin with the raw amino-acid sequence, 334 residues long: Probable tRNA pseudouridine synthase B (334 aa).

D82 functions as the Nucleophile in the catalytic mechanism. In terms of domain architecture, PUA spans 250-325 (LPKVWIRDSA…IAVDVDKVFM (76 aa)).

Belongs to the pseudouridine synthase TruB family. Type 2 subfamily.

It catalyses the reaction uridine(55) in tRNA = pseudouridine(55) in tRNA. Functionally, could be responsible for synthesis of pseudouridine from uracil-55 in the psi GC loop of transfer RNAs. This chain is Probable tRNA pseudouridine synthase B, found in Thermococcus gammatolerans (strain DSM 15229 / JCM 11827 / EJ3).